We begin with the raw amino-acid sequence, 290 residues long: Phosphatidylglycerol--prolipoprotein diacylglyceryl transferase (290 aa).

The next 7 membrane-spanning stretches (helical) occupy residues 21–41 (VALHWYGLMYLVGFIFAMWLA), 60–80 (LLYAGFLGVFLGGRIGYVLFY), 96–116 (WDGGMSFHGGLIGVILVMVIF), 124–144 (FFQVADFMAPLIPFGLGAGRL), 198–218 (SQLYELALEGVVLFIILNLFI), 225–245 (GSVSGLFLIGYGAFRIIVEFF), and 260–280 (ISMGQILSIPMIVAGIIMMIW). Residue arginine 143 coordinates a 1,2-diacyl-sn-glycero-3-phospho-(1'-sn-glycerol).

The protein belongs to the Lgt family.

It localises to the cell inner membrane. It catalyses the reaction L-cysteinyl-[prolipoprotein] + a 1,2-diacyl-sn-glycero-3-phospho-(1'-sn-glycerol) = an S-1,2-diacyl-sn-glyceryl-L-cysteinyl-[prolipoprotein] + sn-glycerol 1-phosphate + H(+). The protein operates within protein modification; lipoprotein biosynthesis (diacylglyceryl transfer). In terms of biological role, catalyzes the transfer of the diacylglyceryl group from phosphatidylglycerol to the sulfhydryl group of the N-terminal cysteine of a prolipoprotein, the first step in the formation of mature lipoproteins. The polypeptide is Phosphatidylglycerol--prolipoprotein diacylglyceryl transferase (Enterobacter sp. (strain 638)).